Here is a 236-residue protein sequence, read N- to C-terminus: Thioredoxin-like 2-2, chloroplastic (236 aa).

A chloroplast-targeting transit peptide spans 1-82 (MAGVVRLTTT…LRRPKSQVVR (82 aa)). The Thioredoxin domain maps to 83-220 (VKVDENVAET…QLELGITLQT (138 aa)). Active-site nucleophile residues include Cys-135 and Cys-138. Residues Cys-135 and Cys-138 are joined by a disulfide bond.

It belongs to the thioredoxin family.

It localises to the plastid. The protein resides in the chloroplast. Thiol-disulfide oxidoreductase that may participate in various redox reactions. Possesses insulin disulfide bonds reducing activity. The protein is Thioredoxin-like 2-2, chloroplastic of Arabidopsis thaliana (Mouse-ear cress).